Here is a 258-residue protein sequence, read N- to C-terminus: Flagellin B3 (258 aa).

Residues 1–8 (MRFLKKRG) constitute a propeptide that is removed on maturation.

This sequence belongs to the archaeal flagellin family.

It localises to the archaeal flagellum. Flagellin is the subunit protein which polymerizes to form the filaments of archaeal flagella. This chain is Flagellin B3 (flaB3), found in Thermococcus kodakarensis (strain ATCC BAA-918 / JCM 12380 / KOD1) (Pyrococcus kodakaraensis (strain KOD1)).